Here is a 201-residue protein sequence, read N- to C-terminus: Cardiotrophin-1 (201 aa).

Belongs to the IL-6 superfamily. In terms of tissue distribution, highly expressed in heart, skeletal muscle, prostate and ovary. Lower levels in lung, kidney, pancreas, thymus, testis and small intestine. Little or no expression in brain, placenta, liver, spleen, colon or peripheral blood leukocytes.

Its subcellular location is the secreted. Functionally, induces cardiac myocyte hypertrophy in vitro. Binds to and activates the ILST/gp130 receptor. The polypeptide is Cardiotrophin-1 (CTF1) (Homo sapiens (Human)).